Consider the following 330-residue polypeptide: GMP reductase (330 aa).

C180 acts as the Thioimidate intermediate in catalysis. 209 to 232 (LIADGGIRHNGDIAKSVRFGASMV) contacts NADP(+).

The protein belongs to the IMPDH/GMPR family. GuaC type 2 subfamily.

The catalysed reaction is IMP + NH4(+) + NADP(+) = GMP + NADPH + 2 H(+). Functionally, catalyzes the irreversible NADPH-dependent deamination of GMP to IMP. It functions in the conversion of nucleobase, nucleoside and nucleotide derivatives of G to A nucleotides, and in maintaining the intracellular balance of A and G nucleotides. This chain is GMP reductase, found in Lactobacillus johnsonii (strain CNCM I-12250 / La1 / NCC 533).